A 425-amino-acid chain; its full sequence is Formyl-CoA:oxalate CoA-transferase (425 aa).

CoA contacts are provided by residues 17–18 (QS), arginine 38, 72–75 (LDTK), 96–98 (NFG), arginine 104, and 136–139 (KVYE). Aspartate 168 functions as the Nucleophile in the catalytic mechanism. Substrate is bound at residue 247–249 (GGQ).

This sequence belongs to the CoA-transferase III family. Frc subfamily. Homodimer.

It carries out the reaction formyl-CoA + oxalate = oxalyl-CoA + formate. Its pathway is metabolic intermediate degradation; oxalate degradation; CO(2) and formate from oxalate: step 1/2. Its function is as follows. Involved in the catabolism of oxalate and in the adapatation to low pH via the induction of the oxalate-dependent acid tolerance response (ATR). Catalyzes the transfer of the CoA moiety from formyl-CoA to oxalate. This is Formyl-CoA:oxalate CoA-transferase from Rhodopseudomonas palustris (strain BisA53).